The chain runs to 346 residues: B3 domain-containing protein At3g25182 (346 aa).

The interval 168–187 (KRRAVEQRKRTGGVKKAKVA) is disordered. The TF-B3 DNA-binding region spans 237 to 338 (FNNLLRNDFL…ILCFAMEQRS (102 aa)).

The protein resides in the nucleus. The chain is B3 domain-containing protein At3g25182 from Arabidopsis thaliana (Mouse-ear cress).